The following is a 1522-amino-acid chain: Paired amphipathic helix protein pst1 (1522 aa).

The interval 139–174 is disordered; it reads TILSSTDSNIPRPGTVKSSASPFVPNQNPSAPPPPP. Residues 178-248 enclose the PAH 1 domain; that stretch reads RQLNVTDALS…QGFNTFLPPG (71 aa). The interval 307-339 is disordered; that stretch reads QSSASHPVLQPPAPSTLQFNPSPSPAAPSYPPV. Pro residues predominate over residues 328-337; sequence SPSPAAPSYP. The region spanning 345–415 is the PAH 2 domain; sequence QAADLDQAIN…EEFKRFLPDV (71 aa). Disordered regions lie at residues 422-504, 928-968, and 1343-1522; these read ETQD…AFNV, AREN…DESS, and SGKA…KDDL. Residues 426–441 are compositionally biased toward polar residues; the sequence is KSTVVPQESATATPKR. S442 bears the Phosphoserine mark. A compositionally biased stretch (low complexity) spans 442–468; the sequence is SPSATPTSALPPIGKFAPPTTAKAQPA. At T446 the chain carries Phosphothreonine. The PAH 3 domain maps to 504 to 576; the sequence is VPIAQNKNPS…NWLKDLVKYN (73 aa). The segment covering 928-960 has biased composition (basic and acidic residues); that stretch reads ARENRSSVKEDYVSESTERTPDASEIDEHISEH. Over residues 1385 to 1398 the composition is skewed to polar residues; sequence GKSSVTRGNKTNLK. Basic and acidic residues predominate over residues 1403–1432; sequence RNNDDSSNKINLSEKEKEKESIEDEEKNRE. S1443 carries the phosphoserine modification. Basic and acidic residues predominate over residues 1461–1474; sequence TSSHRPERSSEKKS. Residues 1478-1487 are compositionally biased toward polar residues; the sequence is VFTSVKQTAE. The segment covering 1488–1522 has biased composition (acidic residues); it reads NDADNEDDKTDMDDQTEETLDADNTMEEEPSKDDL.

The protein localises to the nucleus. In terms of biological role, has a role in modulating the nuclear import of TF1 virus-like particles. Essential for viability. This is Paired amphipathic helix protein pst1 (pst1) from Schizosaccharomyces pombe (strain 972 / ATCC 24843) (Fission yeast).